Consider the following 691-residue polypeptide: Dipeptidyl-peptidase 5 (691 aa).

The first 20 residues, 1–20 (MKRTILSLLAAVSLAIPVYA), serve as a signal peptide directing secretion. Residues S549, D634, and H666 each act as charge relay system in the active site.

It belongs to the peptidase S9C family. Homodimer.

The protein localises to the periplasm. Catalyzes the removal of dipeptides from the N-terminus of oligopeptides. Prefers Ala and hydrophobic residues at the P1 position, and has no preference for P2 residues. Shows the highest dipeptidyl peptidase activity toward the synthetic substrate Lys-Ala-methylcoumaryl-7-amide (Lys-Ala-MCA). Is likely involved in amino acid metabolism and bacterial growth/survival of asaccharolytic P.endodontalis, that utilizes amino acids from extracellular proteinaceous nutrients as energy and carbon sources. This chain is Dipeptidyl-peptidase 5, found in Porphyromonas endodontalis (strain ATCC 35406 / DSM 24491 / JCM 8526 / CCUG 16442 / BCRC 14492 / NCTC 13058 / HG 370) (Bacteroides endodontalis).